Consider the following 264-residue polypeptide: Tritrans,polycis-undecaprenyl-diphosphate synthase (geranylgeranyl-diphosphate specific) (264 aa).

The active site involves aspartate 43. Aspartate 43 lines the Mg(2+) pocket. Residues 44–47, tryptophan 48, histidine 60, and 88–90 each bind substrate; these read GNRR and STE. Asparagine 91 (proton acceptor) is an active-site residue. Residues phenylalanine 92, arginine 94, arginine 213, and 219-221 contribute to the substrate site; that span reads RIS. Residue glutamate 232 coordinates Mg(2+).

The protein belongs to the UPP synthase family. As to quaternary structure, homodimer. The cofactor is Mg(2+).

The enzyme catalyses geranylgeranyl diphosphate + 7 isopentenyl diphosphate = tri-trans,hepta-cis-undecaprenyl diphosphate + 7 diphosphate. Its function is as follows. Catalyzes the sequential condensation of isopentenyl diphosphate (IPP) with geranylgeranyl diphosphate (GGPP) to yield (2Z,6Z,10Z,14Z,18Z,22Z,26Z,30E,34E,38E)-undecaprenyl diphosphate (tritrans,heptacis-UPP). It is probably the precursor of glycosyl carrier lipids. The protein is Tritrans,polycis-undecaprenyl-diphosphate synthase (geranylgeranyl-diphosphate specific) of Pyrococcus furiosus (strain ATCC 43587 / DSM 3638 / JCM 8422 / Vc1).